The sequence spans 238 residues: MRAIYIISVIIVSLSIFSWGGNARSDYPWAMFALRLQWPAGFCEVNNACDTKSLLNTFTIHGLYPYNAKGTPALYCDGTAFDVNSVSDFLAEMHLAWPSHETNTEDIQFWEHEWKKHGRCSEALLKQTDYFRTALAFRKAFDIVGLLNQEGIYPNNDLYRPKMIKEAIKKHLNAVPEIDFTKNENSEYVLTDINVCVNQQATRFVDCPTDDATDDYRLKFVRLPSKMKFADPRTNSII.

The first 23 residues, 1–23 (MRAIYIISVIIVSLSIFSWGGNA), serve as a signal peptide directing secretion. Q37 contributes to the RNA binding site. Residues C43 and C49 are joined by a disulfide bond. RNA contacts are provided by residues H61, F109, 112 to 113 (HE), and 116 to 117 (KH). H61 acts as the Proton donor in catalysis. Cystine bridges form between C76/C120 and C196/C207. The active site involves E113. Catalysis depends on H117, which acts as the Proton acceptor.

It belongs to the RNase T2 family. As to quaternary structure, homodimer. As to expression, root.

Functionally, may act as a storage protein providing a nitrogen source. Seems to have no RNase activity although it has conserved the active site residues. The protein is Ribonuclease-like storage protein of Panax ginseng (Korean ginseng).